Reading from the N-terminus, the 312-residue chain is Pantothenate kinase (312 aa).

Position 97–104 (97–104 (GSVAVGKS)) interacts with ATP.

Belongs to the prokaryotic pantothenate kinase family.

Its subcellular location is the cytoplasm. It carries out the reaction (R)-pantothenate + ATP = (R)-4'-phosphopantothenate + ADP + H(+). It participates in cofactor biosynthesis; coenzyme A biosynthesis; CoA from (R)-pantothenate: step 1/5. The sequence is that of Pantothenate kinase from Mycolicibacterium vanbaalenii (strain DSM 7251 / JCM 13017 / BCRC 16820 / KCTC 9966 / NRRL B-24157 / PYR-1) (Mycobacterium vanbaalenii).